The following is a 243-amino-acid chain: DNA repair protein RecO (243 aa).

The protein belongs to the RecO family.

Functionally, involved in DNA repair and RecF pathway recombination. The chain is DNA repair protein RecO from Hyphomonas neptunium (strain ATCC 15444).